A 337-amino-acid chain; its full sequence is MTDPKKISRVALKGYDLTKVSRALEECEDQPGVRVGGVQIVSGGEAEAPAHLEDNRQGAIGDNFDVFSRDSKNVQIVTEHEDSSDEEYEEARSYGDDSGHQPNRAAVPFADDEYGDFKRARERLPQLFHEGWGFGSQQANEESSEGLQQQSGECGSGGGSSNAGGKDEDDLQEKTGHEKEKSVIVPPKESGSVSGYHGSCDIPFNMEEFLASPATTQRRQLLELCQLIADRSNEELIFFPWGFNLVKRKVHRVEPQQPVAVSHRFTWEDFQLKLKAGFTLIHKKTKAPVVLNSSSYNLGSVPEGGISLSPDDTELSVLIKCLRYLGLYKFLATQIEF.

Disordered stretches follow at residues 77 to 110 and 136 to 194; these read VTEH…VPFA and SQQA…GSVS. 2 stretches are compositionally biased toward basic and acidic residues: residues 90-99 and 172-182; these read EARSYGDDSG and QEKTGHEKEKS.

As to quaternary structure, homotrimer. This trimer is stabilized by binding to the L protein. Binds N(0), and N in ribonucleocapsid. Phosphorylated by host kinases. Phosphorylation play an important role in facilitating trimerization and possibly P-L complex formation.

The protein localises to the virion. Its subcellular location is the host cytoplasm. In terms of biological role, essential component of the RNA polymerase transcription and replication complex. Binds the viral ribonucleocapsid and positions the L polymerase on the template. May act as a chaperone for newly synthesized free N protein, so-called N(0). Plays a role in virion assembly. The polypeptide is Phosphoprotein (P) (Tupaia virus (isolate Tupaia/Thailand/-/1986) (TUPV)).